An 807-amino-acid chain; its full sequence is Spondin-1 (807 aa).

Positions 1–28 are cleaved as a signal peptide; the sequence is MRLSPVLLRLSRGPALLALALPLAVALA. The 166-residue stretch at 29–194 folds into the Reelin domain; the sequence is FSDETLDKVP…DSTFDGVTDK (166 aa). Cystine bridges form between C44–C128, C156–C182, C199–C336, C200–C340, C202–C415, C443–C480, C454–C489, C459–C494, C502–C538, C513–C517, C548–C554, C559–C595, C570–C574, C605–C610, C615–C650, C626–C630, and C660–C665. The Spondin domain maps to 195 to 388; it reads PILDCCACGT…LTSLDHPQSP (194 aa). N-linked (GlcNAc...) asparagine glycosylation is present at N214. Positions 325, 354, and 358 each coordinate Ca(2+). TSP type-1 domains follow at residues 442–495, 501–555, 558–611, 614–666, 668–721, and 754–806; these read TCIY…PGCS, TCTM…EECS, SCLT…PECH, PCLL…PECP, DCEL…RKCL, and GCRM…NVHP. Residue N681 is glycosylated (N-linked (GlcNAc...) asparagine).

As to quaternary structure, binds to the central extracellular domain of APP and inhibits beta-secretase cleavage of APP.

It localises to the secreted. The protein localises to the extracellular space. It is found in the extracellular matrix. Cell adhesion protein that promotes the attachment of spinal cord and sensory neuron cells and the outgrowth of neurites in vitro. May contribute to the growth and guidance of axons in both the spinal cord and the PNS. Major factor for vascular smooth muscle cell. The protein is Spondin-1 (SPON1) of Bos taurus (Bovine).